Consider the following 316-residue polypeptide: HPr kinase/phosphorylase (316 aa).

Residues His-143 and Lys-164 contribute to the active site. Residue 158-165 (GEAGSGKS) participates in ATP binding. Position 165 (Ser-165) interacts with Mg(2+). Asp-182 serves as the catalytic Proton acceptor; for phosphorylation activity. Proton donor; for dephosphorylation activity. Residues 206-215 (LEVRGLGVLN) are important for the catalytic mechanism of both phosphorylation and dephosphorylation. A Mg(2+)-binding site is contributed by Glu-207. Arg-251 is a catalytic residue. The tract at residues 272–277 (PVMPGR) is important for the catalytic mechanism of dephosphorylation.

The protein belongs to the HPrK/P family. In terms of assembly, homohexamer. It depends on Mg(2+) as a cofactor.

The enzyme catalyses [HPr protein]-L-serine + ATP = [HPr protein]-O-phospho-L-serine + ADP + H(+). It catalyses the reaction [HPr protein]-O-phospho-L-serine + phosphate + H(+) = [HPr protein]-L-serine + diphosphate. Its function is as follows. Catalyzes the ATP- as well as the pyrophosphate-dependent phosphorylation of a specific serine residue in HPr, a phosphocarrier protein of the phosphoenolpyruvate-dependent sugar phosphotransferase system (PTS). HprK/P also catalyzes the pyrophosphate-producing, inorganic phosphate-dependent dephosphorylation (phosphorolysis) of seryl-phosphorylated HPr (P-Ser-HPr). This Stenotrophomonas maltophilia (strain R551-3) protein is HPr kinase/phosphorylase.